Consider the following 150-residue polypeptide: Large ribosomal subunit protein uL11 (150 aa).

Residues 83–111 (AAGLKPQGKRNRAKGSEKPGRQTAGTVTA) form a disordered region.

Belongs to the universal ribosomal protein uL11 family. As to quaternary structure, part of the ribosomal stalk of the 50S ribosomal subunit. Interacts with L10 and the large rRNA to form the base of the stalk. L10 forms an elongated spine to which L12 dimers bind in a sequential fashion forming a multimeric L10(L12)X complex. Post-translationally, one or more lysine residues are methylated.

Functionally, forms part of the ribosomal stalk which helps the ribosome interact with GTP-bound translation factors. The polypeptide is Large ribosomal subunit protein uL11 (Paracoccus denitrificans (strain Pd 1222)).